We begin with the raw amino-acid sequence, 561 residues long: Putative transport protein DNO_0009 (561 aa).

Helical transmembrane passes span 4 to 24 (VAITICILSLVASLGLWLGNI), 29 to 49 (VGLSIGGVLFGGIIISHIMNL), 74 to 94 (FGLILFVYTIGIQVGPGFFAS), 104 to 124 (AFAALIVLLGGLCSVILYYLF), and 166 to 186 (MGYAIAYPFGIIGVLLAMWLI). 2 RCK C-terminal domains span residues 198 to 283 (LQFF…ILGE) and 285 to 369 (AGHE…LIGN). 6 consecutive transmembrane segments (helical) span residues 379–399 (MLPVFIGIGLGVLLGSIPIYL), 411–433 (AGGPLVVALVLARIGSIGKLYWF), 447–467 (IVLFLSVIGIHAGEHFFSTLL), 472–492 (FSWICYGAIITLLPLLIAGII), 501–521 (YLTICGLLAGAMTDTPALAFA), and 538–558 (VYPLTTFLRIMLPQLIAVLLW).

It belongs to the AAE transporter (TC 2.A.81) family. YidE subfamily.

It localises to the cell membrane. The protein is Putative transport protein DNO_0009 of Dichelobacter nodosus (strain VCS1703A).